We begin with the raw amino-acid sequence, 118 residues long: Holo-[acyl-carrier-protein] synthase (118 aa).

Mg(2+)-binding residues include D5 and E50.

The protein belongs to the P-Pant transferase superfamily. AcpS family. Mg(2+) is required as a cofactor.

The protein localises to the cytoplasm. It carries out the reaction apo-[ACP] + CoA = holo-[ACP] + adenosine 3',5'-bisphosphate + H(+). Transfers the 4'-phosphopantetheine moiety from coenzyme A to a Ser of acyl-carrier-protein. The sequence is that of Holo-[acyl-carrier-protein] synthase from Wolinella succinogenes (strain ATCC 29543 / DSM 1740 / CCUG 13145 / JCM 31913 / LMG 7466 / NCTC 11488 / FDC 602W) (Vibrio succinogenes).